Reading from the N-terminus, the 209-residue chain is Ephrin-A2 (209 aa).

The N-terminal stretch at 1–20 (MAPAQRPLLPLLLLLLPLRA) is a signal peptide. An Ephrin RBD domain is found at 30–170 (ADRYAVYWNR…RLKVYVRPTN (141 aa)). N38 carries an N-linked (GlcNAc...) asparagine glycan. 2 cysteine pairs are disulfide-bonded: C69–C110 and C98–C159. N-linked (GlcNAc...) asparagine glycans are attached at residues N170 and N184. A lipid anchor (GPI-anchor amidated asparagine) is attached at N184. Positions 185-209 (SSCSGLGGCHLFLTTVPVLWSLLGS) are cleaved as a propeptide — removed in mature form.

It belongs to the ephrin family. Binds to the receptor tyrosine kinases EPHA3, EPHA4 and EPHA5. Interacts with EPHA8; activates EPHA8. In terms of tissue distribution, expressed in myogenic progenitor cells.

The protein localises to the cell membrane. Functionally, cell surface GPI-bound ligand for Eph receptors, a family of receptor tyrosine kinases which are crucial for migration, repulsion and adhesion during neuronal, vascular and epithelial development. Binds promiscuously Eph receptors residing on adjacent cells, leading to contact-dependent bidirectional signaling into neighboring cells. The signaling pathway downstream of the receptor is referred to as forward signaling while the signaling pathway downstream of the ephrin ligand is referred to as reverse signaling. With the EPHA2 receptor may play a role in bone remodeling through regulation of osteoclastogenesis and osteoblastogenesis. This is Ephrin-A2 (Efna2) from Mus musculus (Mouse).